The following is a 529-amino-acid chain: BTB/POZ domain-containing protein 6 (529 aa).

One can recognise a BTB domain in the interval Ala-127–Ala-197.

As to quaternary structure, homodimer and heterodimer. Interacts with cul3 via the BTB domain.

The protein localises to the cytoplasm. In terms of biological role, adapter protein for the cul3 E3 ubiquitin-protein ligase complex. Involved in late neuronal development and muscle formation. The protein is BTB/POZ domain-containing protein 6 (btbd6) of Xenopus tropicalis (Western clawed frog).